The chain runs to 362 residues: Neutral protease 2 homolog MEP2 (362 aa).

The signal sequence occupies residues 1–19 (MLFPSIVAALAALANPVLS). A propeptide spanning residues 20–177 (LTIPQATGSE…SKAINPISAR (158 aa)) is cleaved from the precursor. Disulfide bonds link Cys-184/Cys-255 and Cys-262/Cys-280. Residue His-304 coordinates Zn(2+). The active site involves Glu-305. Zn(2+)-binding residues include His-308 and Asp-319.

The protein belongs to the peptidase M35 family. Requires Zn(2+) as cofactor.

The protein localises to the secreted. It carries out the reaction Preferential cleavage of bonds with hydrophobic residues in P1'. Also 3-Asn-|-Gln-4 and 8-Gly-|-Ser-9 bonds in insulin B chain.. Functionally, secreted metalloproteinase that allows assimilation of proteinaceous substrates. Shows high activities on basic nuclear substrates such as histone and protamine. May be involved in virulence. The protein is Neutral protease 2 homolog MEP2 (MEP2) of Coccidioides posadasii (strain C735) (Valley fever fungus).